The chain runs to 73 residues: uncharacterized protein (73 aa).

A signal peptide spans 1–23 (MLHLIKMVSKIVLLITLVFIVSA).

This is an uncharacterized protein from Acheta domesticus (House cricket).